The chain runs to 175 residues: Protein tyrosine phosphatase PRL-1 (175 aa).

Residues K15–C172 form the Tyrosine-protein phosphatase domain. Residues C53 and C114 are joined by a disulfide bond. D76 functions as the Proton donor in the catalytic mechanism. C114 acts as the Phosphocysteine intermediate in catalysis. A substrate-binding site is contributed by A116–R120. Cysteine methyl ester is present on C172. A lipid anchor (S-farnesyl cysteine) is attached at C172. A propeptide spans V173–M175 (removed in mature form).

This sequence belongs to the protein-tyrosine phosphatase family.

It localises to the cytoplasm. The protein resides in the mitochondrion matrix. Its subcellular location is the kinetoplast. The protein localises to the secreted. It is found in the extracellular exosome. It catalyses the reaction O-phospho-L-tyrosyl-[protein] + H2O = L-tyrosyl-[protein] + phosphate. Activated in a reduced environment which promotes the reduction of the disulfide bond between the regulatory Cys-53 and catalytic Cys-114 residues. Its function is as follows. Has protein tyrosine phosphatase activity and may act as a virulence factor to support intracellular survival in host macrophages. The protein is Protein tyrosine phosphatase PRL-1 of Leishmania major.